The chain runs to 184 residues: Ribosome-recycling factor (184 aa).

Belongs to the RRF family.

The protein localises to the cytoplasm. In terms of biological role, responsible for the release of ribosomes from messenger RNA at the termination of protein biosynthesis. May increase the efficiency of translation by recycling ribosomes from one round of translation to another. The polypeptide is Ribosome-recycling factor (Clostridium botulinum (strain Okra / Type B1)).